Consider the following 417-residue polypeptide: Gamma-glutamyl phosphate reductase (417 aa).

It belongs to the gamma-glutamyl phosphate reductase family.

The protein resides in the cytoplasm. It carries out the reaction L-glutamate 5-semialdehyde + phosphate + NADP(+) = L-glutamyl 5-phosphate + NADPH + H(+). It participates in amino-acid biosynthesis; L-proline biosynthesis; L-glutamate 5-semialdehyde from L-glutamate: step 2/2. Its function is as follows. Catalyzes the NADPH-dependent reduction of L-glutamate 5-phosphate into L-glutamate 5-semialdehyde and phosphate. The product spontaneously undergoes cyclization to form 1-pyrroline-5-carboxylate. This chain is Gamma-glutamyl phosphate reductase, found in Escherichia coli (strain K12 / MC4100 / BW2952).